The sequence spans 356 residues: WAT1-related protein At1g68170 (356 aa).

The next 10 helical transmembrane spans lie at 4 to 24 (ITAM…FKLA), 33 to 53 (VLVA…CFIF), 65 to 85 (LMLL…ILTI), 94 to 114 (TFTS…AALL), 125 to 145 (VGLA…VFIF), 176 to 196 (ISIL…LWFL), 210 to 230 (WNAT…ALCW), 245 to 265 (LLTI…VNAW), 273 to 293 (LFVS…GSFL), and 298 to 318 (LHLG…IVLW). EamA domains lie at 14-142 (TAGL…GALV) and 191-317 (ISLW…YIVL).

Belongs to the drug/metabolite transporter (DMT) superfamily. Plant drug/metabolite exporter (P-DME) (TC 2.A.7.4) family.

The protein resides in the membrane. The protein is WAT1-related protein At1g68170 of Arabidopsis thaliana (Mouse-ear cress).